We begin with the raw amino-acid sequence, 281 residues long: Aspartate/glutamate leucyltransferase (281 aa).

It belongs to the R-transferase family. Bpt subfamily.

It is found in the cytoplasm. The catalysed reaction is N-terminal L-glutamyl-[protein] + L-leucyl-tRNA(Leu) = N-terminal L-leucyl-L-glutamyl-[protein] + tRNA(Leu) + H(+). It carries out the reaction N-terminal L-aspartyl-[protein] + L-leucyl-tRNA(Leu) = N-terminal L-leucyl-L-aspartyl-[protein] + tRNA(Leu) + H(+). Its function is as follows. Functions in the N-end rule pathway of protein degradation where it conjugates Leu from its aminoacyl-tRNA to the N-termini of proteins containing an N-terminal aspartate or glutamate. The chain is Aspartate/glutamate leucyltransferase from Paracoccus denitrificans (strain Pd 1222).